A 62-amino-acid chain; its full sequence is Teretoxin Tsu1.1 (62 aa).

The first 21 residues, 1-21, serve as a signal peptide directing secretion; the sequence is MSCFPVLFVMMLLASQSVWAF. The propeptide occupies 22-40; that stretch reads PEPETRIGTARDAESMGVR.

It belongs to the teretoxin A (TA) superfamily. Contains 2 disulfide bonds. As to expression, expressed by the venom duct.

Its subcellular location is the secreted. The chain is Teretoxin Tsu1.1 from Terebra subulata (Chocolate spotted auger).